The primary structure comprises 371 residues: UDP-N-acetylglucosamine--N-acetylmuramyl-(pentapeptide) pyrophosphoryl-undecaprenol N-acetylglucosamine transferase (371 aa).

Residues 15–17, asparagine 126, arginine 172, serine 199, isoleucine 256, 275–280, and glutamine 301 contribute to the UDP-N-acetyl-alpha-D-glucosamine site; these read TGG and ALTVSE.

It belongs to the glycosyltransferase 28 family. MurG subfamily.

It localises to the cell inner membrane. The catalysed reaction is di-trans,octa-cis-undecaprenyl diphospho-N-acetyl-alpha-D-muramoyl-L-alanyl-D-glutamyl-meso-2,6-diaminopimeloyl-D-alanyl-D-alanine + UDP-N-acetyl-alpha-D-glucosamine = di-trans,octa-cis-undecaprenyl diphospho-[N-acetyl-alpha-D-glucosaminyl-(1-&gt;4)]-N-acetyl-alpha-D-muramoyl-L-alanyl-D-glutamyl-meso-2,6-diaminopimeloyl-D-alanyl-D-alanine + UDP + H(+). It functions in the pathway cell wall biogenesis; peptidoglycan biosynthesis. Cell wall formation. Catalyzes the transfer of a GlcNAc subunit on undecaprenyl-pyrophosphoryl-MurNAc-pentapeptide (lipid intermediate I) to form undecaprenyl-pyrophosphoryl-MurNAc-(pentapeptide)GlcNAc (lipid intermediate II). The sequence is that of UDP-N-acetylglucosamine--N-acetylmuramyl-(pentapeptide) pyrophosphoryl-undecaprenol N-acetylglucosamine transferase from Francisella philomiragia subsp. philomiragia (strain ATCC 25017 / CCUG 19701 / FSC 153 / O#319-036).